The chain runs to 349 residues: MAENAYSKAGVDVEAGYQVVERIKKHVARTERLGAMGALGSFGGMFDLSSLHLKEPVLVSGTDGVGTKLLLAIEADKHDTIGIDCVAMCVNDILAQGAEPLFFLDYIATGKTDPVKMEQIVKGVADGCEQAGAALIGGETAEMPDMYGAEDYDLAGFTVGAVEKQKLITEGAVKEGDTLIGIPSSGIHSNGYSLVRKIFFKDNELTLDAEISELDVPLVEELLKPTRIYVKPVLEVLKEVDVHGITHVTGGGFVENLPRMLTNDLAVKVELGSWPVLPIFDVMKKYGQLSELEMYEIFNMGIGMVLAVAKADVERTLEVLVQNGEAAYVIGEVTTRENDAVIFTGGTKG.

It belongs to the AIR synthase family.

The protein localises to the cytoplasm. The catalysed reaction is 2-formamido-N(1)-(5-O-phospho-beta-D-ribosyl)acetamidine + ATP = 5-amino-1-(5-phospho-beta-D-ribosyl)imidazole + ADP + phosphate + H(+). It participates in purine metabolism; IMP biosynthesis via de novo pathway; 5-amino-1-(5-phospho-D-ribosyl)imidazole from N(2)-formyl-N(1)-(5-phospho-D-ribosyl)glycinamide: step 2/2. The sequence is that of Phosphoribosylformylglycinamidine cyclo-ligase from Listeria monocytogenes serotype 4b (strain CLIP80459).